Reading from the N-terminus, the 98-residue chain is NADH-ubiquinone oxidoreductase chain 4L (98 aa).

Transmembrane regions (helical) follow at residues 1–21 (MSVVYINIFLAFILSFMGLLV), 30–50 (LLCLEGMMLSLFVMMTITVLT), and 61–81 (IILLVFAACEAALGLSLLVMI).

It belongs to the complex I subunit 4L family. As to quaternary structure, core subunit of respiratory chain NADH dehydrogenase (Complex I) which is composed of 45 different subunits.

The protein resides in the mitochondrion inner membrane. It catalyses the reaction a ubiquinone + NADH + 5 H(+)(in) = a ubiquinol + NAD(+) + 4 H(+)(out). Its function is as follows. Core subunit of the mitochondrial membrane respiratory chain NADH dehydrogenase (Complex I) which catalyzes electron transfer from NADH through the respiratory chain, using ubiquinone as an electron acceptor. Part of the enzyme membrane arm which is embedded in the lipid bilayer and involved in proton translocation. This chain is NADH-ubiquinone oxidoreductase chain 4L (MT-ND4L), found in Lontra canadensis (North American river otter).